Here is a 685-residue protein sequence, read N- to C-terminus: Translation initiation factor IF-2 (685 aa).

The tr-type G domain occupies 185–354 (KRPPVVTVMG…LLTAEMQELK (170 aa)). The tract at residues 194–201 (GHVDHGKT) is G1. Residue 194 to 201 (GHVDHGKT) coordinates GTP. A G2 region spans residues 219–223 (GITQH). Residues 240–243 (DTPG) form a G3 region. GTP-binding positions include 240 to 244 (DTPGH) and 294 to 297 (NKMD). The interval 294 to 297 (NKMD) is G4. Residues 330 to 332 (SAH) are G5.

It belongs to the TRAFAC class translation factor GTPase superfamily. Classic translation factor GTPase family. IF-2 subfamily.

It localises to the cytoplasm. Its function is as follows. One of the essential components for the initiation of protein synthesis. Protects formylmethionyl-tRNA from spontaneous hydrolysis and promotes its binding to the 30S ribosomal subunits. Also involved in the hydrolysis of GTP during the formation of the 70S ribosomal complex. The polypeptide is Translation initiation factor IF-2 (Clostridium tetani (strain Massachusetts / E88)).